We begin with the raw amino-acid sequence, 242 residues long: Host range factor p28 (242 aa).

A KilA-N domain is found at 21 to 131 (YIDEPNDIRL…QSILRGLVNW (111 aa)). The RING-type zinc finger occupies 173–226 (CGICYEVVYSKRLENDRYFGLLDSCNHIFCITCINIWHRTRRETGASDNCPICR).

Belongs to the orthopoxvirus OPG021 family.

It is found in the host cytoplasm. The catalysed reaction is S-ubiquitinyl-[E2 ubiquitin-conjugating enzyme]-L-cysteine + [acceptor protein]-L-lysine = [E2 ubiquitin-conjugating enzyme]-L-cysteine + N(6)-ubiquitinyl-[acceptor protein]-L-lysine.. In terms of biological role, RING-finger E3 ubiquitin ligase which catalyzes the formation of both 'Lys-48'- and 'Lys-63'-linked polyubiquitin chains. Plays an important role in virulence by acting as an anti-apoptotic factor. This is Host range factor p28 (OPG021) from Cowpox virus (strain Brighton Red) (CPV).